Here is a 620-residue protein sequence, read N- to C-terminus: Palmitoyltransferase ZDHHC17 (620 aa).

Residues 1 to 292 (MADALVGYEK…LKMDKEFRQK (292 aa)) lie on the Cytoplasmic side of the membrane. ANK repeat units lie at residues 77–106 (ENVT…IVDQ), 111–140 (LNST…DPSL), 144–173 (EGCS…DVDM), 177–207 (NGMT…SVNL), 212–241 (HKNT…NVDA), and 245–274 (KGET…AKGY). Transmembrane regions (helical) follow at residues 293–313 (VMLG…DLDI) and 314–334 (DSWL…QFLS). At 335–345 (KSFFDHSMHSA) the chain is on the cytoplasmic side. The chain crosses the membrane as a helical span at residues 346–366 (LPLGIYLATKFWMYITWFYWF). The Lumenal portion of the chain corresponds to 367 to 369 (WND). A helical transmembrane segment spans residues 370–390 (LPFVTIHLPFLLNSLALFYNF). The Cytoplasmic segment spans residues 391–469 (GKSWKSDPGI…NCVGSGNHRY (79 aa)). Residues 425-475 (IFCSTCLIRKPIRSKHCAVCNRCIAKFDHHCPWVGNCVGSGNHRYFMGYLF) enclose the DHHC domain. The S-palmitoyl cysteine intermediate role is filled by cysteine 455. A helical transmembrane segment spans residues 470 to 490 (FMGYLFFLLCMICWMMYGCIC). Residues 491–504 (YWRIHCATSYTKDG) lie on the Lumenal side of the membrane. Residues 505 to 524 (FWIYITQIATCSPWMFWMFL) traverse the membrane as a helical segment. At 525–620 (NSVFHFMWVA…QTSGSGYQLV (96 aa)) the chain is on the cytoplasmic side.

This sequence belongs to the DHHC palmitoyltransferase family. AKR/ZDHHC17 subfamily. In terms of processing, autopalmitoylated.

Its subcellular location is the golgi apparatus membrane. It localises to the cytoplasmic vesicle membrane. The protein localises to the presynaptic cell membrane. The catalysed reaction is L-cysteinyl-[protein] + hexadecanoyl-CoA = S-hexadecanoyl-L-cysteinyl-[protein] + CoA. It carries out the reaction L-cysteinyl-[protein] + tetradecanoyl-CoA = S-tetradecanoyl-L-cysteinyl-[protein] + CoA. It catalyses the reaction L-cysteinyl-[protein] + octadecanoyl-CoA = S-octadecanoyl-L-cysteinyl-[protein] + CoA. Functionally, palmitoyltransferase that catalyzes the addition of palmitate onto various protein substrates and is involved in a variety of cellular processes. Has no stringent fatty acid selectivity and in addition to palmitate can also transfer onto target proteins myristate from tetradecanoyl-CoA and stearate from octadecanoyl-CoA. Plays a role in axonogenesis. The sequence is that of Palmitoyltransferase ZDHHC17 from Danio rerio (Zebrafish).